The primary structure comprises 438 residues: 3-phosphoshikimate 1-carboxyvinyltransferase (438 aa).

The 3-phosphoshikimate site is built by Lys26, Ser27, and Arg31. Lys26 lines the phosphoenolpyruvate pocket. Residues Gly99 and Arg127 each coordinate phosphoenolpyruvate. Residues Ser172, Gln174, Asp320, and Lys347 each coordinate 3-phosphoshikimate. Phosphoenolpyruvate is bound at residue Gln174. Asp320 acts as the Proton acceptor in catalysis. Residues Arg351 and Arg392 each contribute to the phosphoenolpyruvate site.

The protein belongs to the EPSP synthase family. Monomer.

The protein localises to the cytoplasm. It catalyses the reaction 3-phosphoshikimate + phosphoenolpyruvate = 5-O-(1-carboxyvinyl)-3-phosphoshikimate + phosphate. It functions in the pathway metabolic intermediate biosynthesis; chorismate biosynthesis; chorismate from D-erythrose 4-phosphate and phosphoenolpyruvate: step 6/7. In terms of biological role, catalyzes the transfer of the enolpyruvyl moiety of phosphoenolpyruvate (PEP) to the 5-hydroxyl of shikimate-3-phosphate (S3P) to produce enolpyruvyl shikimate-3-phosphate and inorganic phosphate. The sequence is that of 3-phosphoshikimate 1-carboxyvinyltransferase from Xanthomonas campestris pv. campestris (strain 8004).